Consider the following 140-residue polypeptide: MGRIIAIDYGRKRTGIAATDILQMIANGVATVPSGEVVKYLSDYISREPVDLFVVGLRKQMNNEPSENMKYVEAFVTHLKRTIPSIPVTYYDERFTSVLAHKAMLEGGLKKKKRQDKGLVDEISAVIILQAYLESKKYQL.

This sequence belongs to the YqgF nuclease family.

It localises to the cytoplasm. Its function is as follows. Could be a nuclease involved in processing of the 5'-end of pre-16S rRNA. This chain is Putative pre-16S rRNA nuclease, found in Parabacteroides distasonis (strain ATCC 8503 / DSM 20701 / CIP 104284 / JCM 5825 / NCTC 11152).